The following is a 613-amino-acid chain: TANK-binding kinase 1-binding protein 1 (613 aa).

Residues Met-1–Cys-280 form a homodimerization region. The stretch at Tyr-48–Ile-162 forms a coiled coil. A Phosphoserine modification is found at Ser-184. Residues Thr-218–Gln-277 adopt a coiled-coil conformation. Residues Gly-281–Asn-330 are interaction with TBK1 and IKBKE. A disordered region spans residues Ala-328–Arg-457. Residues Pro-346 to Ala-361 are compositionally biased toward pro residues. Positions Pro-362–Ser-372 are enriched in low complexity. 6 positions are modified to phosphoserine: Ser-365, Ser-372, Ser-379, Ser-385, Ser-400, and Ser-415. Residues Pro-389–Cys-406 show a composition bias toward pro residues. Pro residues predominate over residues Pro-416–Gly-433. A phosphoserine mark is found at Ser-502 and Ser-532. The UBZ1-type zinc-finger motif lies at Ile-581–His-607. Residues Cys-584, Cys-587, His-603, and His-607 each contribute to the Zn(2+) site.

As to quaternary structure, homodimer. May form a heterodimer with NAP1. Interacts with TKB1 and IKBKE. Weakly interacts with DDX3X.

Its function is as follows. Adapter protein which constitutively binds TBK1 and IKBKE playing a role in antiviral innate immunity. Essential for the efficient induction of IRF-dependent transcription following infection with Sendai virus. The sequence is that of TANK-binding kinase 1-binding protein 1 from Rattus norvegicus (Rat).